A 146-amino-acid chain; its full sequence is Small ribosomal subunit protein uS13A (146 aa).

Ser-2 is subject to N-acetylserine. Lys-36 is covalently cross-linked (Glycyl lysine isopeptide (Lys-Gly) (interchain with G-Cter in ubiquitin)). Residue Lys-48 is modified to N6-methyllysine; by RKM1. Glycyl lysine isopeptide (Lys-Gly) (interchain with G-Cter in ubiquitin) cross-links involve residues Lys-49, Lys-80, and Lys-96.

This sequence belongs to the universal ribosomal protein uS13 family. Component of the small ribosomal subunit (SSU). Mature yeast ribosomes consist of a small (40S) and a large (60S) subunit. The 40S small subunit contains 1 molecule of ribosomal RNA (18S rRNA) and 33 different proteins (encoded by 57 genes). The large 60S subunit contains 3 rRNA molecules (25S, 5.8S and 5S rRNA) and 46 different proteins (encoded by 81 genes). N-terminally acetylated by acetyltransferase NatA.

It localises to the cytoplasm. In terms of biological role, component of the ribosome, a large ribonucleoprotein complex responsible for the synthesis of proteins in the cell. The small ribosomal subunit (SSU) binds messenger RNAs (mRNAs) and translates the encoded message by selecting cognate aminoacyl-transfer RNA (tRNA) molecules. The large subunit (LSU) contains the ribosomal catalytic site termed the peptidyl transferase center (PTC), which catalyzes the formation of peptide bonds, thereby polymerizing the amino acids delivered by tRNAs into a polypeptide chain. The nascent polypeptides leave the ribosome through a tunnel in the LSU and interact with protein factors that function in enzymatic processing, targeting, and the membrane insertion of nascent chains at the exit of the ribosomal tunnel. The chain is Small ribosomal subunit protein uS13A from Saccharomyces cerevisiae (strain ATCC 204508 / S288c) (Baker's yeast).